A 196-amino-acid polypeptide reads, in one-letter code: Small ribosomal subunit protein uS5 (196 aa).

The 64-residue stretch at 17–80 (FEEKMLFVNR…AVARKNMITV (64 aa)) folds into the S5 DRBM domain. Residues 164–196 (GTEVRPSLSSDSPAGRSATTEAGEGVADTGGMQ) are disordered. The span at 170–183 (SLSSDSPAGRSATT) shows a compositional bias: polar residues.

It belongs to the universal ribosomal protein uS5 family. Part of the 30S ribosomal subunit. Contacts proteins S4 and S8.

Functionally, with S4 and S12 plays an important role in translational accuracy. Its function is as follows. Located at the back of the 30S subunit body where it stabilizes the conformation of the head with respect to the body. This Deinococcus radiodurans (strain ATCC 13939 / DSM 20539 / JCM 16871 / CCUG 27074 / LMG 4051 / NBRC 15346 / NCIMB 9279 / VKM B-1422 / R1) protein is Small ribosomal subunit protein uS5.